Here is a 251-residue protein sequence, read N- to C-terminus: Cell division protein ZapD (251 aa).

The protein belongs to the ZapD family. As to quaternary structure, interacts with FtsZ.

The protein resides in the cytoplasm. Functionally, cell division factor that enhances FtsZ-ring assembly. Directly interacts with FtsZ and promotes bundling of FtsZ protofilaments, with a reduction in FtsZ GTPase activity. This chain is Cell division protein ZapD, found in Burkholderia orbicola (strain MC0-3).